A 2492-amino-acid chain; its full sequence is Talin-A (2492 aa).

Positions 84–365 (RPQKFKLLDG…GYIEIIMKAR (282 aa)) constitute an FERM domain. The I/LWEQ domain maps to 2250–2492 (EEDNVLEDLE…NSRKQNYNKN (243 aa)).

It is found in the cytoplasm. The protein localises to the cytoskeleton. Its subcellular location is the cell cortex. Its function is as follows. Actin-binding protein that may be involved in the control of cell motility and chemotaxis. This Dictyostelium discoideum (Social amoeba) protein is Talin-A (talA).